Here is a 406-residue protein sequence, read N- to C-terminus: Eukaryotic initiation factor 4A-I (406 aa).

The interval 1-21 is disordered; the sequence is MSASQDSRSRDNGPDGMEPEG. Ser2 carries the post-translational modification N-acetylserine. The residue at position 4 (Ser4) is a Phosphoserine. The Q motif motif lies at 32 to 60; it reads DSFDDMNLSESLLRGIYAYGFEKPSAIQQ. In terms of domain architecture, Helicase ATP-binding spans 63–234; that stretch reads ILPCIKGYDV…KKFMRDPIRI (172 aa). Residue 76-83 coordinates ATP; sequence AQSGTGKT. The residue at position 118 (Lys118) is an N6-acetyllysine. Lys146 participates in a covalent cross-link: Glycyl lysine isopeptide (Lys-Gly) (interchain with G-Cter in SUMO2). The residue at position 158 (Thr158) is a Phosphothreonine. The residue at position 174 (Lys174) is an N6-acetyllysine. Residues 182-185 carry the DEAD box motif; the sequence is DEAD. Residue Lys193 is modified to N6-acetyllysine. Lys225 is covalently cross-linked (Glycyl lysine isopeptide (Lys-Gly) (interchain with G-Cter in SUMO2)). Lys238 is subject to N6-acetyllysine; alternate. Lys238 participates in a covalent cross-link: Glycyl lysine isopeptide (Lys-Gly) (interchain with G-Cter in SUMO2); alternate. The 162-residue stretch at 245–406 folds into the Helicase C-terminal domain; it reads GIRQFYINVE…EMPLNVADLI (162 aa). Residues Lys309, Lys369, and Lys381 each participate in a glycyl lysine isopeptide (Lys-Gly) (interchain with G-Cter in SUMO2) cross-link.

Belongs to the DEAD box helicase family. eIF4A subfamily. EIF4F is a multi-subunit complex, the composition of which varies with external and internal environmental conditions. It is composed of at least EIF4A, EIF4E and EIF4G1/EIF4G3. Interacts with PAIP1, EIF4E and UPF2. Found in a complex with XPO7, EIF4A1, ARHGAP1, VPS26A, VPS29, VPS35 and SFN. May interact with NOM1. Interacts with PDCD4; this interferes with the interaction between EIF4A and EIF4G. Interacts with RBM4. Interacts with DDX3X in an RNA-independent manner. Interacts with PKP1 (via N-terminus); the interaction promotes EIF4A1 recruitment to the cap-dependent translation complex and EIF4A1 ATPase activity.

It localises to the cytoplasm. The protein resides in the perinuclear region. Its subcellular location is the cell membrane. It is found in the stress granule. The enzyme catalyses ATP + H2O = ADP + phosphate + H(+). ATP-dependent RNA helicase which is a subunit of the eIF4F complex involved in cap recognition and is required for mRNA binding to ribosome. In the current model of translation initiation, eIF4A unwinds RNA secondary structures in the 5'-UTR of mRNAs which is necessary to allow efficient binding of the small ribosomal subunit, and subsequent scanning for the initiator codon. As a result, promotes cell proliferation and growth. This chain is Eukaryotic initiation factor 4A-I (EIF4A1), found in Macaca fascicularis (Crab-eating macaque).